A 439-amino-acid polypeptide reads, in one-letter code: Ribosomal protein uS12 methylthiotransferase RimO (439 aa).

The MTTase N-terminal domain maps to 2–114 (SKLYLMSLGC…VDEMILKKTN (113 aa)). 6 residues coordinate [4Fe-4S] cluster: Cys11, Cys45, Cys77, Cys146, Cys150, and Cys153. In terms of domain architecture, Radical SAM core spans 132-363 (TGSNSHAFIK…VNEVIEKSFE (232 aa)).

This sequence belongs to the methylthiotransferase family. RimO subfamily. [4Fe-4S] cluster is required as a cofactor.

The protein localises to the cytoplasm. It catalyses the reaction L-aspartate(89)-[ribosomal protein uS12]-hydrogen + (sulfur carrier)-SH + AH2 + 2 S-adenosyl-L-methionine = 3-methylsulfanyl-L-aspartate(89)-[ribosomal protein uS12]-hydrogen + (sulfur carrier)-H + 5'-deoxyadenosine + L-methionine + A + S-adenosyl-L-homocysteine + 2 H(+). In terms of biological role, catalyzes the methylthiolation of an aspartic acid residue of ribosomal protein uS12. The chain is Ribosomal protein uS12 methylthiotransferase RimO from Campylobacter jejuni (strain RM1221).